The primary structure comprises 357 residues: Membrane-bound lytic murein transglycosylase C (357 aa).

An N-terminal signal peptide occupies residues 1 to 15 (MKKYLLLALLPFLYA). C16 carries the N-palmitoyl cysteine lipid modification. C16 carries S-diacylglycerol cysteine lipidation.

The protein belongs to the transglycosylase Slt family.

It is found in the cell outer membrane. The catalysed reaction is Exolytic cleavage of the (1-&gt;4)-beta-glycosidic linkage between N-acetylmuramic acid (MurNAc) and N-acetylglucosamine (GlcNAc) residues in peptidoglycan, from either the reducing or the non-reducing ends of the peptidoglycan chains, with concomitant formation of a 1,6-anhydrobond in the MurNAc residue.. Its function is as follows. Murein-degrading enzyme. May play a role in recycling of muropeptides during cell elongation and/or cell division. This is Membrane-bound lytic murein transglycosylase C from Haemophilus influenzae (strain 86-028NP).